Reading from the N-terminus, the 75-residue chain is UPF0352 protein ETA_12580 (75 aa).

This sequence belongs to the UPF0352 family.

This is UPF0352 protein ETA_12580 from Erwinia tasmaniensis (strain DSM 17950 / CFBP 7177 / CIP 109463 / NCPPB 4357 / Et1/99).